Here is a 218-residue protein sequence, read N- to C-terminus: Insulin-induced gene 2 protein (218 aa).

At Met-1 to Leu-21 the chain is on the cytoplasmic side. A helical membrane pass occupies residues Leu-22–Val-44. Topologically, residues Gln-45–Ala-63 are lumenal. The helical transmembrane segment at Trp-64–Tyr-81 threads the bilayer. At Pro-82–Arg-96 the chain is on the cytoplasmic side. A helical membrane pass occupies residues Glu-97–Asp-119. The Lumenal portion of the chain corresponds to Phe-120 to Asn-122. Residues Asn-123–Phe-141 form a helical membrane-spanning segment. The Cytoplasmic segment spans residues Asp-142 to Ser-146. Residues Gly-147–Asn-168 traverse the membrane as a helical segment. The Lumenal segment spans residues Gly-169–Arg-182. A helical transmembrane segment spans residues Ser-183–Gly-200. The Cytoplasmic portion of the chain corresponds to Arg-201–Asp-218. Positions Val-212–Asp-218 match the KxHxx motif.

This sequence belongs to the INSIG family. Interacts with scap; interaction is direct and only takes place in the presence of sterols; it prevents interaction between scap and the coat protein complex II (COPII). Associates with the SCAP-SREBP complex; association is mediated via its interaction with scap and only takes place in the presence of sterols.

Its subcellular location is the endoplasmic reticulum membrane. Its function is as follows. Oxysterol-binding protein that mediates feedback control of cholesterol synthesis by controlling both endoplasmic reticulum to Golgi transport of scap and degradation of hmgcr. Acts as a negative regulator of cholesterol biosynthesis by mediating the retention of the SCAP-SREBP complex in the endoplasmic reticulum, thereby blocking the processing of sterol regulatory element-binding proteins (SREBPs). Binds oxysterol, including 22-hydroxycholesterol, 24-hydroxycholesterol, 25-hydroxycholesterol and 27-hydroxycholesterol, regulating interaction with scap and retention of the SCAP-SREBP complex in the endoplasmic reticulum. In presence of oxysterol, interacts with scap, retaining the SCAP-SREBP complex in the endoplasmic reticulum, thereby preventing scap from escorting SREBPs to the Golgi. Sterol deprivation reduce oxysterol-binding, disrupting the interaction between insig2 and scap, thereby promoting Golgi transport of the SCAP-SREBP complex, followed by processing and nuclear translocation of SREBPs. Also regulates cholesterol synthesis by regulating degradation of hmgcr. This is Insulin-induced gene 2 protein from Xenopus tropicalis (Western clawed frog).